Consider the following 96-residue polypeptide: Cell division protein FtsB (96 aa).

Residues 1–11 (MDIKSNSFFYI) lie on the Cytoplasmic side of the membrane. A helical membrane pass occupies residues 12-29 (FISVVLLLIAILQYDLWF). At 30-96 (SNTGFIKYQA…KQGEVFYSVK (67 aa)) the chain is on the periplasmic side.

This sequence belongs to the FtsB family. Part of a complex composed of FtsB, FtsL and FtsQ.

It is found in the cell inner membrane. Its function is as follows. Essential cell division protein. May link together the upstream cell division proteins, which are predominantly cytoplasmic, with the downstream cell division proteins, which are predominantly periplasmic. This Francisella tularensis subsp. tularensis (strain SCHU S4 / Schu 4) protein is Cell division protein FtsB.